A 1034-amino-acid chain; its full sequence is Potassium-transporting ATPase alpha chain 1 (1034 aa).

The Cytoplasmic portion of the chain corresponds to 1 to 97; the sequence is MGKAENYEMY…NALRPPRGTP (97 aa). Phosphotyrosine occurs at positions 7 and 10. Residues 14 to 41 form a disordered region; the sequence is LGPGPGGDMAAKMSKKKAGKGGGKKKEK. Residues 26-39 show a composition bias toward basic residues; it reads MSKKKAGKGGGKKK. Residue Ser-27 is modified to Phosphoserine. The helical transmembrane segment at 98-118 threads the bilayer; it reads EYVKFARQLAGGLQCLMWVAA. Residues 119 to 141 lie on the Lumenal side of the membrane; it reads AICLIAFAIQASEGDLTTDDNLY. The chain crosses the membrane as a helical span at residues 142–162; the sequence is LALALIAVVVVTGCFGYYQEF. Over 163 to 298 the chain is Cytoplasmic; that stretch reads KSTNIIASFK…NEKTPIAIEI (136 aa). Positions 225–239 are enriched in polar residues; that stretch reads NSSLTGESEPQTRSP. Residues 225 to 245 are disordered; sequence NSSLTGESEPQTRSPECTHES. A helical transmembrane segment spans residues 299–318; it reads EHFVDIIAGLAILFGATFFV. Topologically, residues 319-330 are lumenal; that stretch reads VAMCIGYTFLRA. Residues 331–348 form a helical membrane-spanning segment; the sequence is MVFFMAIVVAYVPEGLLA. Positions 339, 340, 342, and 344 each coordinate K(+). Topologically, residues 349–782 are cytoplasmic; the sequence is TVTVCLSLTA…EQGRLIFDNL (434 aa). Asp-386 acts as the 4-aspartylphosphate intermediate in catalysis. The Mg(2+) site is built by Asp-386 and Thr-388. Phosphoserine is present on residues Ser-462 and Ser-600. The Mg(2+) site is built by Asp-727 and Asp-731. Residues 783–802 form a helical membrane-spanning segment; it reads KKSIAYTLTKNIPELTPYLI. Position 796 (Glu-796) interacts with K(+). At 803-812 the chain is on the lumenal side; the sequence is YITVSVPLPL. A helical membrane pass occupies residues 813-833; that stretch reads GCITILFIELCTDIFPSVSLA. Residue Glu-821 coordinates K(+). Topologically, residues 834 to 853 are cytoplasmic; it reads YEKAESDIMHLRPRNPKRDR. Ser-839 is subject to Phosphoserine. The helical transmembrane segment at 854–876 threads the bilayer; the sequence is LVNEPLAAYSYFQIGAIQSFAGF. The Lumenal portion of the chain corresponds to 877-928; it reads TDYFTAMAQEGWFPLLCVGLRPYWENHHLQDLQDSYGQEWTFGQRLYQQYTC. A helical transmembrane segment spans residues 929 to 948; that stretch reads YTVFFISIEMCQIADVLIRK. At 949–962 the chain is on the cytoplasmic side; that stretch reads TRRLSAFQQGFFRN. Ser-953 carries the phosphoserine; by PKA modification. A helical transmembrane segment spans residues 963–981; that stretch reads RILVIAIVFQVCIGCFLCY. Over 982–996 the chain is Lumenal; that stretch reads CPGMPNIFNFMPIRY. A helical transmembrane segment spans residues 997 to 1017; sequence QWWLVPMPFGLLIFVYDEIRK. At 1018–1034 the chain is on the cytoplasmic side; sequence LGVRCCPGSWWDQELYY.

This sequence belongs to the cation transport ATPase (P-type) (TC 3.A.3) family. Type IIC subfamily. In terms of assembly, the gastric H(+)/K(+) ATPase pump is composed of the catalytic alpha subunit ATP4A and the regulatory beta subunit ATP4B. Interacts (via the P-domain) with ATP4B (via N-terminus); this interaction stabilizes the lumenal-open E2 conformation state and prevents the reverse reaction of the transport cycle.

Its subcellular location is the apical cell membrane. It catalyses the reaction K(+)(out) + ATP + H2O + H(+)(in) = K(+)(in) + ADP + phosphate + 2 H(+)(out). Functionally, the catalytic subunit of the gastric H(+)/K(+) ATPase pump which transports H(+) ions in exchange for K(+) ions across the apical membrane of parietal cells. Uses ATP as an energy source to pump H(+) ions to the gastric lumen while transporting K(+) ion from the lumen into the cell. Remarkably generates a million-fold proton gradient across the gastric parietal cell membrane, acidifying the gastric juice down to pH 1. Within a transport cycle, the transfer of a H(+) ion across the membrane is coupled to ATP hydrolysis and is associated with a transient phosphorylation that shifts the pump conformation from inward-facing (E1) to outward-facing state (E2). The release of the H(+) ion in the stomach lumen is followed by binding of K(+) ion converting the pump conformation back to the E1 state. The polypeptide is Potassium-transporting ATPase alpha chain 1 (ATP4A) (Canis lupus familiaris (Dog)).